The chain runs to 294 residues: Porphobilinogen deaminase (294 aa).

The residue at position 232 (Cys-232) is an S-(dipyrrolylmethanemethyl)cysteine.

It belongs to the HMBS family. As to quaternary structure, monomer. The cofactor is dipyrromethane.

It carries out the reaction 4 porphobilinogen + H2O = hydroxymethylbilane + 4 NH4(+). It functions in the pathway porphyrin-containing compound metabolism; protoporphyrin-IX biosynthesis; coproporphyrinogen-III from 5-aminolevulinate: step 2/4. Its function is as follows. Tetrapolymerization of the monopyrrole PBG into the hydroxymethylbilane pre-uroporphyrinogen in several discrete steps. The protein is Porphobilinogen deaminase of Corynebacterium diphtheriae (strain ATCC 700971 / NCTC 13129 / Biotype gravis).